Reading from the N-terminus, the 155-residue chain is Fibroblast growth factor 1 (155 aa).

N-acetylalanine is present on Ala-2. Positions 2-15 (AEGEITTFSALTER) are excised as a propeptide. Asn-33 serves as a coordination point for heparin. Positions 127–143 (KKNGSCKRGPRTHYGQK) are heparin-binding.

Belongs to the heparin-binding growth factors family. In terms of assembly, monomer. Homodimer. Interacts with FGFR1, FGFR2, FGFR3 and FGFR4. Affinity between fibroblast growth factors (FGFs) and their receptors is increased by heparan sulfate glycosaminoglycans that function as coreceptors. Found in a complex with FGFBP1, FGF1 and FGF2. Interacts with FGFBP1. Part of a Cu(2+)-dependent multiprotein aggregate containing FGF1, S100A13 and SYT1. Interacts with SYT1. Interacts with S100A13. Interacts with LRRC59. Interacts with CSNKA, CSNKB and FIBP. While binding with LRRC59, CSNKA and FIBP seem mutually exclusive, CSNKB and FIBP may cooperatively interact with FGF1. Forms a ternary complex with FGFR1 and ITGAV:ITGB3 and induces the recruitment of PTPN11 to the complex. Post-translationally, in the nucleus, phosphorylated by PKC/PRKCD.

Its subcellular location is the secreted. The protein localises to the cytoplasm. The protein resides in the cell cortex. It is found in the cytosol. It localises to the nucleus. Plays an important role in the regulation of cell survival, cell division, angiogenesis, cell differentiation and cell migration. Functions as a potent mitogen in vitro. Acts as a ligand for FGFR1 and integrins. Binds to FGFR1 in the presence of heparin leading to FGFR1 dimerization and activation via sequential autophosphorylation on tyrosine residues which act as docking sites for interacting proteins, leading to the activation of several signaling cascades. Binds to integrin ITGAV:ITGB3. Its binding to integrin, subsequent ternary complex formation with integrin and FGFR1, and the recruitment of PTPN11 to the complex are essential for FGF1 signaling. Induces the phosphorylation and activation of FGFR1, FRS2, MAPK3/ERK1, MAPK1/ERK2 and AKT1. Can induce angiogenesis. In Mesocricetus auratus (Golden hamster), this protein is Fibroblast growth factor 1 (FGF1).